A 1082-amino-acid polypeptide reads, in one-letter code: Putative white-brown complex homolog protein 30 (1082 aa).

2 consecutive transmembrane segments (helical) span residues 12 to 32 (HIFL…SLDG) and 292 to 312 (NIHA…IMVY). The span at 329–348 (SREAAARHAKETTQARERWK) shows a compositional bias: basic and acidic residues. A disordered region spans residues 329-437 (SREAAARHAK…QAPKGKQLHT (109 aa)). The ABC transporter domain occupies 484–726 (VAFKDLTLTL…FADIGITVPD (243 aa)). 518–525 (GPSGAGKT) is an ATP binding site. The ABC transmembrane type-2 domain maps to 832–1029 (RQYRYFVGRV…TLEAFVLSNA (198 aa)). Transmembrane regions (helical) follow at residues 853–873 (ALDF…AKVN), 877–897 (IDTL…KISA), 958–978 (YIVL…FAIL), 979–999 (YSPS…TLIA), and 1054–1074 (WILC…IAYF).

It belongs to the ABC transporter superfamily. ABCG family. Eye pigment precursor importer (TC 3.A.1.204) subfamily.

The protein localises to the membrane. This is Putative white-brown complex homolog protein 30 (WBC30) from Arabidopsis thaliana (Mouse-ear cress).